Reading from the N-terminus, the 504-residue chain is Flavin-dependent halogenase armH3 (504 aa).

Residues G16, A19, E49, and A149 each contribute to the FAD site. Chloride is bound by residues S329 and G330. I331 is a binding site for FAD. The disordered stretch occupies residues 444–475 (NNLRTPVDTGAADVKAKHAPSETDAQNPLQSM).

Belongs to the flavin-dependent halogenase family.

The enzyme catalyses melleolide F + FADH2 + chloride + O2 = 6'-chloromelleolide F + FAD + 2 H2O + H(+). Flavin-dependent halogenase involved in the biosynthesis of melleolides, a range of antifungal and phytotoxic polyketide derivatives composed of an orsellinic acid (OA) moiety esterified to various sesquiterpene alcohols. The halogenase catalyzes the transfer of a single chlorine atom to the melleolide backbone, resulting in a 6'-chloromelleolide product. The enzyme acts on free substrate and does not depend on carrier-protein-dependent acceptor molecules. In Armillaria mellea (Honey mushroom), this protein is Flavin-dependent halogenase armH3.